The sequence spans 454 residues: Argininosuccinate lyase (454 aa).

Belongs to the lyase 1 family. Argininosuccinate lyase subfamily.

The protein localises to the cytoplasm. The catalysed reaction is 2-(N(omega)-L-arginino)succinate = fumarate + L-arginine. Its pathway is amino-acid biosynthesis; L-arginine biosynthesis; L-arginine from L-ornithine and carbamoyl phosphate: step 3/3. This chain is Argininosuccinate lyase, found in Herpetosiphon aurantiacus (strain ATCC 23779 / DSM 785 / 114-95).